A 464-amino-acid polypeptide reads, in one-letter code: MTHYDVVVLGAGPGGYVAAIRAAQLGLSTAIVEPKYWGGVCLNVGCIPSKALLRNAELVHIFTKDAKAFGISGEVTFDYGIAYDRSRKVAEGRVAGVHFLMKKNKITEIHGYGTFADANTLLVDLNDGGTESVTFDNAIIATGSSTRLVPGTSLSANVVTYEEQILSRELPKSIIIAGAGAIGMEFGYVLKNYGVDVTIVEFLPRALPNEDADVSKEIEKQFKKLGVTILTATKVESIADGGSQVTVTVTKDGVAQELKAEKVLQAIGFAPNVEGYGLDKAGVALTDRKAIGVDDYMRTNVGHIYAIGDVNGLLQLAHVAEAQGVVAAETIAGAETLTLGDHRMLPRATFCQPNVASFGLTEQQARNEGYDVVVAKFPFTANAKAHGVGDPSGFVKLVADAKHGELLGGHLVGHDVAELLPELTLAQRWDLTASELARNVHTHPTMSEALQECFHGLVGHMINF.

Residues 33 to 41 (EPKYWGGVC), Lys-50, and Gly-113 each bind FAD. Cys-41 and Cys-46 are disulfide-bonded. NAD(+)-binding positions include 178–182 (GAGAI), Glu-201, and 266–269 (AIGF). FAD contacts are provided by Asp-309 and Ala-317. The active-site Proton acceptor is His-443.

This sequence belongs to the class-I pyridine nucleotide-disulfide oxidoreductase family. As to quaternary structure, homodimer. Part of the PDH complex, consisting of multiple copies of AceE (E1), DlaT (E2) and Lpd (E3), and of the BCKADH complex, consisting of multiple copies of BkdA/BkdB (E1), BkdC (E2) and Lpd (E3). It depends on FAD as a cofactor.

It localises to the cytoplasm. It catalyses the reaction N(6)-[(R)-dihydrolipoyl]-L-lysyl-[protein] + NAD(+) = N(6)-[(R)-lipoyl]-L-lysyl-[protein] + NADH + H(+). Its function is as follows. Lipoamide dehydrogenase is a component of the alpha-ketoacid dehydrogenase complexes. Catalyzes the reoxidation of dihydrolipoyl groups which are covalently attached to the lipoate acyltransferase components (E2) of the complexes. This Mycobacterium bovis (strain ATCC BAA-935 / AF2122/97) protein is Dihydrolipoyl dehydrogenase (lpd).